A 196-amino-acid chain; its full sequence is Protein GrpE (196 aa).

Residues 1–24 form a disordered region; it reads MAENERTTENFQPQDPSYAEAATT.

It belongs to the GrpE family. Homodimer.

The protein localises to the cytoplasm. In terms of biological role, participates actively in the response to hyperosmotic and heat shock by preventing the aggregation of stress-denatured proteins, in association with DnaK and GrpE. It is the nucleotide exchange factor for DnaK and may function as a thermosensor. Unfolded proteins bind initially to DnaJ; upon interaction with the DnaJ-bound protein, DnaK hydrolyzes its bound ATP, resulting in the formation of a stable complex. GrpE releases ADP from DnaK; ATP binding to DnaK triggers the release of the substrate protein, thus completing the reaction cycle. Several rounds of ATP-dependent interactions between DnaJ, DnaK and GrpE are required for fully efficient folding. The polypeptide is Protein GrpE (Gloeobacter violaceus (strain ATCC 29082 / PCC 7421)).